Reading from the N-terminus, the 185-residue chain is Elongation factor P (185 aa).

It belongs to the elongation factor P family.

Its subcellular location is the cytoplasm. It functions in the pathway protein biosynthesis; polypeptide chain elongation. In terms of biological role, involved in peptide bond synthesis. Stimulates efficient translation and peptide-bond synthesis on native or reconstituted 70S ribosomes in vitro. Probably functions indirectly by altering the affinity of the ribosome for aminoacyl-tRNA, thus increasing their reactivity as acceptors for peptidyl transferase. This is Elongation factor P from Streptococcus equi subsp. equi (strain 4047).